The primary structure comprises 623 residues: Chaperone protein HtpG (623 aa).

Positions 1 to 341 (MEKREFKAES…SQDLSLNISR (341 aa)) are a; substrate-binding. The interval 342–549 (EMLQHDRQLS…EGEVSIEMEK (208 aa)) is b. Residues 550-623 (ILSAMPNNQG…FTNDICKLMK (74 aa)) form a c region.

It belongs to the heat shock protein 90 family. In terms of assembly, homodimer.

The protein resides in the cytoplasm. Molecular chaperone. Has ATPase activity. The chain is Chaperone protein HtpG from Clostridium perfringens (strain 13 / Type A).